The sequence spans 494 residues: Guanosine-5'-triphosphate,3'-diphosphate pyrophosphatase (494 aa).

It belongs to the GppA/Ppx family. GppA subfamily.

The enzyme catalyses guanosine 3'-diphosphate 5'-triphosphate + H2O = guanosine 3',5'-bis(diphosphate) + phosphate + H(+). Its pathway is purine metabolism; ppGpp biosynthesis; ppGpp from GTP: step 2/2. Catalyzes the conversion of pppGpp to ppGpp. Guanosine pentaphosphate (pppGpp) is a cytoplasmic signaling molecule which together with ppGpp controls the 'stringent response', an adaptive process that allows bacteria to respond to amino acid starvation, resulting in the coordinated regulation of numerous cellular activities. This chain is Guanosine-5'-triphosphate,3'-diphosphate pyrophosphatase, found in Shigella dysenteriae serotype 1 (strain Sd197).